The chain runs to 414 residues: Serine hydroxymethyltransferase (414 aa).

(6S)-5,6,7,8-tetrahydrofolate-binding positions include L121 and 125 to 127 (GHL). The residue at position 229 (K229) is an N6-(pyridoxal phosphate)lysine.

The protein belongs to the SHMT family. As to quaternary structure, homodimer. The cofactor is pyridoxal 5'-phosphate.

It localises to the cytoplasm. It carries out the reaction (6R)-5,10-methylene-5,6,7,8-tetrahydrofolate + glycine + H2O = (6S)-5,6,7,8-tetrahydrofolate + L-serine. It participates in one-carbon metabolism; tetrahydrofolate interconversion. The protein operates within amino-acid biosynthesis; glycine biosynthesis; glycine from L-serine: step 1/1. In terms of biological role, catalyzes the reversible interconversion of serine and glycine with tetrahydrofolate (THF) serving as the one-carbon carrier. This reaction serves as the major source of one-carbon groups required for the biosynthesis of purines, thymidylate, methionine, and other important biomolecules. Also exhibits THF-independent aldolase activity toward beta-hydroxyamino acids, producing glycine and aldehydes, via a retro-aldol mechanism. This is Serine hydroxymethyltransferase from Variovorax paradoxus (strain S110).